The chain runs to 496 residues: Lysine--tRNA ligase (496 aa).

Residues E408 and E415 each contribute to the Mg(2+) site.

This sequence belongs to the class-II aminoacyl-tRNA synthetase family. Homodimer. Mg(2+) serves as cofactor.

The protein resides in the cytoplasm. It catalyses the reaction tRNA(Lys) + L-lysine + ATP = L-lysyl-tRNA(Lys) + AMP + diphosphate. The polypeptide is Lysine--tRNA ligase (Legionella pneumophila (strain Corby)).